The sequence spans 164 residues: Interferon gamma (164 aa).

An N-terminal signal peptide occupies residues 1–19 (MTCQTYCLFVLSVIMIYFG). N-linked (GlcNAc...) asparagine glycosylation is found at N42, N61, and N95.

Belongs to the type II (or gamma) interferon family. In terms of assembly, homodimer.

It is found in the secreted. In terms of biological role, produced by lymphocytes activated by specific antigens or mitogens. IFN-gamma, in addition to having antiviral activity, has important immunoregulatory functions. It is a potent activator of macrophages, it has antiproliferative effects on transformed cells and it can potentiate the antiviral and antitumor effects of the type I interferons. The sequence is that of Interferon gamma (IFNG) from Anas platyrhynchos (Mallard).